The primary structure comprises 264 residues: Teichoic acids export ATP-binding protein TagH (264 aa).

The 222-residue stretch at 22 to 243 folds into the ABC transporter domain; it reads ERLKDVIVPF…YEKFLNDFKK (222 aa). Residue 57 to 64 participates in ATP binding; it reads GINGSGKS.

The protein belongs to the ABC transporter superfamily. Teichoic acids exporter (TC 3.A.1.104.1) family. In terms of assembly, the complex is composed of two ATP-binding proteins (TagH) and two transmembrane proteins (TagG).

It is found in the cell membrane. The catalysed reaction is ATP + H2O + teichoic acidSide 1 = ADP + phosphate + teichoic acidSide 2.. Part of the ABC transporter complex TagGH involved in teichoic acids export. Responsible for energy coupling to the transport system. The chain is Teichoic acids export ATP-binding protein TagH from Staphylococcus saprophyticus subsp. saprophyticus (strain ATCC 15305 / DSM 20229 / NCIMB 8711 / NCTC 7292 / S-41).